The primary structure comprises 368 residues: uncharacterized protein (368 aa).

It belongs to the CdaR family.

This is an uncharacterized protein from Bacillus subtilis (strain 168).